Consider the following 482-residue polypeptide: Anthranilate synthase component 1 (482 aa).

L-tryptophan contacts are provided by residues serine 47 and 267–269 (PYM). 302 to 303 (GT) is a chorismate binding site. Glutamate 329 serves as a coordination point for Mg(2+). Residues tyrosine 417, arginine 437, 451-453 (GGG), and glycine 453 contribute to the chorismate site. Residue glutamate 466 coordinates Mg(2+).

Belongs to the anthranilate synthase component I family. Heterotetramer consisting of two non-identical subunits: a beta subunit (TrpG) and a large alpha subunit (TrpE). Mg(2+) is required as a cofactor.

It carries out the reaction chorismate + L-glutamine = anthranilate + pyruvate + L-glutamate + H(+). It participates in amino-acid biosynthesis; L-tryptophan biosynthesis; L-tryptophan from chorismate: step 1/5. Its activity is regulated as follows. Feedback inhibited by tryptophan. Its function is as follows. Part of a heterotetrameric complex that catalyzes the two-step biosynthesis of anthranilate, an intermediate in the biosynthesis of L-tryptophan. In the first step, the glutamine-binding beta subunit (TrpG) of anthranilate synthase (AS) provides the glutamine amidotransferase activity which generates ammonia as a substrate that, along with chorismate, is used in the second step, catalyzed by the large alpha subunit of AS (TrpE) to produce anthranilate. In the absence of TrpG, TrpE can synthesize anthranilate directly from chorismate and high concentrations of ammonia. The sequence is that of Anthranilate synthase component 1 (trpE) from Spirochaeta aurantia.